Here is a 134-residue protein sequence, read N- to C-terminus: uncharacterized protein (134 aa).

This is an uncharacterized protein from Archaeoglobus fulgidus (strain ATCC 49558 / DSM 4304 / JCM 9628 / NBRC 100126 / VC-16).